The chain runs to 457 residues: ATP synthase subunit beta (457 aa).

147–154 (GGAGVGKT) contributes to the ATP binding site.

The protein belongs to the ATPase alpha/beta chains family. As to quaternary structure, F-type ATPases have 2 components, CF(1) - the catalytic core - and CF(0) - the membrane proton channel. CF(1) has five subunits: alpha(3), beta(3), gamma(1), delta(1), epsilon(1). CF(0) has three main subunits: a(1), b(2) and c(9-12). The alpha and beta chains form an alternating ring which encloses part of the gamma chain. CF(1) is attached to CF(0) by a central stalk formed by the gamma and epsilon chains, while a peripheral stalk is formed by the delta and b chains.

The protein localises to the cell inner membrane. The catalysed reaction is ATP + H2O + 4 H(+)(in) = ADP + phosphate + 5 H(+)(out). Functionally, produces ATP from ADP in the presence of a proton gradient across the membrane. The catalytic sites are hosted primarily by the beta subunits. This Actinobacillus pleuropneumoniae serotype 5b (strain L20) protein is ATP synthase subunit beta.